The chain runs to 154 residues: uncharacterized protein (154 aa).

A disordered region spans residues 91–154 (PSEESWGCRQ…WGSPQPSRGA (64 aa)). A compositionally biased stretch (polar residues) spans 134 to 154 (SRDTSPLGGQSWGSPQPSRGA).

This is an uncharacterized protein from Homo sapiens (Human).